Here is a 408-residue protein sequence, read N- to C-terminus: Probable pectate lyase 5 (408 aa).

The first 27 residues, 1-27, serve as a signal peptide directing secretion; that stretch reads MRMTLVHLSLSLFSCLLLVLSPTFIAS. A glycan (N-linked (GlcNAc...) asparagine) is linked at Asn-45. 3 residues coordinate Ca(2+): Asp-206, Asp-230, and Asp-234. Residue Arg-286 is part of the active site.

This sequence belongs to the polysaccharide lyase 1 family. The cofactor is Ca(2+).

It carries out the reaction Eliminative cleavage of (1-&gt;4)-alpha-D-galacturonan to give oligosaccharides with 4-deoxy-alpha-D-galact-4-enuronosyl groups at their non-reducing ends.. It participates in glycan metabolism; pectin degradation; 2-dehydro-3-deoxy-D-gluconate from pectin: step 2/5. The polypeptide is Probable pectate lyase 5 (Arabidopsis thaliana (Mouse-ear cress)).